An 828-amino-acid chain; its full sequence is MLIPYSPHTIWKTICATLLLSLAFFSQAEQDDSVEFNIHMLDAEDRDNVDLSRFSTSNYIIPGMYYLDIRLNGRDFPRQNINYIEVADNHSVACIDPTLLKKLTINQENQKYIKQISPDCFDISQLPGISIKNDGGVLDITLPRSLMKYEESDWTPPELWDSGVSGLIFDYTLTGTSTRPNKGNNNNTLTGYGQAGLNLGEWRLRAEYQGNYSSEYSSNNRFDWNQIYAYKPLPDLAAKLTVGETYLNSQIFDSFRFTGANLQSDERMLPPSLQGYAPEIHGIANTNAKVTVTQNGRLIYETTVPAGPFVINHLQNTVQGQLDVRVEEQNGKINEFQVQTANLPYMTRPGSVRFNTSLGQSSVNNHKMQGPLFYQGDFSWGMNNTWSLYGGTLLTAKDYNAWSLGIGHDMGRFGTLSGDITQSYSKTYDNEKINGMSFKLNYAKTFDEYHSTITFAGYRFSEKTFRSFSQYIDERYNGINNNGYEKEMYTITGNKTFWADDAEKSTTLYLSYRHQNYWDKNTQEQYGVTVSRNFSIMGIEQINTNLSAFRTQYKGNTDDTLSFNISLPLGSGRNIGYNLQDNNGKVTQMASYADNRDYNNLWRIRAGLSSDKKANTDGYYQHRSQYAEINANASYQQDNYLAVGATIKGGFTATRYGAALHSSSMTSSTARIMVDTDGVAGVPFNGQSTTTNRFGIGVLTDLTSYNNVDARIDVDKMDQDIETRKAIASTTLTEGAIGYYQFPVRQGERLMAVLQTTDNKYPPFGAEVTNQKGESIGMVMEEGLVYIAGVNLNESLNVIWNGKTQCSITIPAEITDPLKHQSLVCQDR.

A signal peptide spans 1–28 (MLIPYSPHTIWKTICATLLLSLAFFSQA).

The protein belongs to the fimbrial export usher family.

It is found in the cell outer membrane. Functionally, involved in the export and assembly of PMF fimbrial subunits across the outer membrane. This chain is Outer membrane usher protein PmfC (pmfC), found in Proteus mirabilis (strain HI4320).